Here is a 97-residue protein sequence, read N- to C-terminus: Peptide YY-A (97 aa).

Residues 1–28 (MAVMLKPWTVVATVLICVLLCLGTFVDA) form the signal peptide. At Tyr64 the chain carries Tyrosine amide. Residues 68 to 97 (STSEDVMAELLFGDDTEHKQRSRYDDSFMW) constitute a propeptide, C-terminal extension.

It belongs to the NPY family. As to expression, mainly expressed in brainstem neurons, and in the telencephalon. Also expressed in intestinal endocrine cells.

It localises to the secreted. The chain is Peptide YY-A (pyya) from Danio rerio (Zebrafish).